The sequence spans 466 residues: Asparagine--tRNA ligase (466 aa).

Belongs to the class-II aminoacyl-tRNA synthetase family. Homodimer.

The protein localises to the cytoplasm. The enzyme catalyses tRNA(Asn) + L-asparagine + ATP = L-asparaginyl-tRNA(Asn) + AMP + diphosphate + H(+). This is Asparagine--tRNA ligase from Escherichia coli O139:H28 (strain E24377A / ETEC).